We begin with the raw amino-acid sequence, 259 residues long: MSDILKIGKYEFTSRLIVGSGKYPDFQTTRDATLASGAEMITVAVRRVNIMDPNEENLMDYFKDTDVKILPNSAGCTTAEEAITLFRLVREATGIDIIKLEVIGDTAKTLYPDVMETLKACEVLAKEDFTIMAYTNDDPIMAKRLENAGAHAVMPLAAPIGSGLGVQNRYNVVFVKDAVNVPVIVDAGIGTASDAAVAMELGADGVLTNTAIAQAKNPIAMAEAMKHAVIAGRMAYKAGRIPKKPYATASSPLEGLIEF.

The active-site Schiff-base intermediate with DXP is the lysine 99. 1-deoxy-D-xylulose 5-phosphate-binding positions include glycine 161, 187-188 (AG), and 209-210 (NT).

It belongs to the ThiG family. As to quaternary structure, homotetramer. Forms heterodimers with either ThiH or ThiS.

Its subcellular location is the cytoplasm. It catalyses the reaction [ThiS sulfur-carrier protein]-C-terminal-Gly-aminoethanethioate + 2-iminoacetate + 1-deoxy-D-xylulose 5-phosphate = [ThiS sulfur-carrier protein]-C-terminal Gly-Gly + 2-[(2R,5Z)-2-carboxy-4-methylthiazol-5(2H)-ylidene]ethyl phosphate + 2 H2O + H(+). The protein operates within cofactor biosynthesis; thiamine diphosphate biosynthesis. Catalyzes the rearrangement of 1-deoxy-D-xylulose 5-phosphate (DXP) to produce the thiazole phosphate moiety of thiamine. Sulfur is provided by the thiocarboxylate moiety of the carrier protein ThiS. In vitro, sulfur can be provided by H(2)S. The protein is Thiazole synthase of Nautilia profundicola (strain ATCC BAA-1463 / DSM 18972 / AmH).